The chain runs to 215 residues: Adenylate kinase (215 aa).

Position 10–15 (10–15 (GAGKGT)) interacts with ATP. Residues 30–59 (STGDMLRAAVKAGSPLGQQVKGVMDSGGLV) form an NMP region. Residues Thr31, Arg36, 57–59 (GLV), 85–88 (GFPR), and Gln92 contribute to the AMP site. The interval 122–159 (GRRVHPASGRVYHTEHNPPKVAGKDDVTGEELIQREDD) is LID. ATP is bound by residues Arg123 and 132 to 133 (VY). Positions 156 and 167 each coordinate AMP. Position 201 (Gly201) interacts with ATP.

The protein belongs to the adenylate kinase family. Monomer.

The protein localises to the cytoplasm. It carries out the reaction AMP + ATP = 2 ADP. It participates in purine metabolism; AMP biosynthesis via salvage pathway; AMP from ADP: step 1/1. In terms of biological role, catalyzes the reversible transfer of the terminal phosphate group between ATP and AMP. Plays an important role in cellular energy homeostasis and in adenine nucleotide metabolism. In Pseudomonas aeruginosa (strain LESB58), this protein is Adenylate kinase.